The primary structure comprises 456 residues: GTPase Der (456 aa).

EngA-type G domains are found at residues 4-169 (PIVA…PAVE) and 177-352 (IKVA…ESHK). GTP-binding positions include 10-17 (GRPNVGKS), 57-61 (DTGGL), 120-123 (NKCE), 183-190 (GRPNVGKS), 230-234 (DTAGI), and 295-298 (NKWD). The KH-like domain maps to 353–438 (RRVSTSVINE…PIILLWRSKK (86 aa)).

The protein belongs to the TRAFAC class TrmE-Era-EngA-EngB-Septin-like GTPase superfamily. EngA (Der) GTPase family. As to quaternary structure, associates with the 50S ribosomal subunit.

GTPase that plays an essential role in the late steps of ribosome biogenesis. This chain is GTPase Der, found in Nostoc punctiforme (strain ATCC 29133 / PCC 73102).